Reading from the N-terminus, the 152-residue chain is Transcriptional regulator MraZ (152 aa).

SpoVT-AbrB domains are found at residues 5–52 and 81–124; these read ATMV…TLPA and ASEC…DEQT.

This sequence belongs to the MraZ family. As to quaternary structure, forms oligomers.

It is found in the cytoplasm. The protein resides in the nucleoid. Functionally, negatively regulates its own expression and that of the subsequent genes in the proximal part of the division and cell wall (dcw) gene cluster. Acts by binding directly to DNA. May also regulate the expression of genes outside the dcw cluster. This Yersinia enterocolitica serotype O:8 / biotype 1B (strain NCTC 13174 / 8081) protein is Transcriptional regulator MraZ.